Here is a 349-residue protein sequence, read N- to C-terminus: Probable esterase Cgl0839 (349 aa).

One can recognise an AB hydrolase-1 domain in the interval 60-329 (GTHQTWFQQY…EDIAGHLGLF (270 aa)). S142 (nucleophile) is an active-site residue. Residues D296 and H325 contribute to the active site.

It belongs to the AB hydrolase superfamily. Acetyl esterase family. As to quaternary structure, homodimer.

Functionally, esterase that catalyzes the hydrolysis of 4-nitrophenyl acetate in vitro. In Corynebacterium glutamicum (strain ATCC 13032 / DSM 20300 / JCM 1318 / BCRC 11384 / CCUG 27702 / LMG 3730 / NBRC 12168 / NCIMB 10025 / NRRL B-2784 / 534), this protein is Probable esterase Cgl0839.